The primary structure comprises 193 residues: Potassium-transporting ATPase KdpC subunit (193 aa).

Residues 14-34 (ITFTFLVLCGLVYPLIVTGIA) traverse the membrane as a helical segment.

This sequence belongs to the KdpC family. The system is composed of three essential subunits: KdpA, KdpB and KdpC.

The protein resides in the cell membrane. Functionally, part of the high-affinity ATP-driven potassium transport (or Kdp) system, which catalyzes the hydrolysis of ATP coupled with the electrogenic transport of potassium into the cytoplasm. This subunit acts as a catalytic chaperone that increases the ATP-binding affinity of the ATP-hydrolyzing subunit KdpB by the formation of a transient KdpB/KdpC/ATP ternary complex. The protein is Potassium-transporting ATPase KdpC subunit of Bacillus cereus (strain B4264).